Reading from the N-terminus, the 255-residue chain is 5'-nucleotidase SurE (255 aa).

A divalent metal cation-binding residues include aspartate 8, aspartate 9, serine 40, and asparagine 93.

This sequence belongs to the SurE nucleotidase family. Requires a divalent metal cation as cofactor.

Its subcellular location is the cytoplasm. It carries out the reaction a ribonucleoside 5'-phosphate + H2O = a ribonucleoside + phosphate. Its function is as follows. Nucleotidase that shows phosphatase activity on nucleoside 5'-monophosphates. This is 5'-nucleotidase SurE from Rhodopseudomonas palustris (strain BisB18).